The chain runs to 216 residues: Large ribosomal subunit protein uL1B (216 aa).

Serine 11 is modified (phosphoserine).

The protein belongs to the universal ribosomal protein uL1 family. Component of the large ribosomal subunit (LSU). Mature yeast ribosomes consist of a small (40S) and a large (60S) subunit. The 40S small subunit contains 1 molecule of ribosomal RNA (18S rRNA) and at least 33 different proteins. The large 60S subunit contains 3 rRNA molecules (25S, 5.8S and 5S rRNA) and at least 46 different proteins. uL1 forms part of the L1 stalk.

It localises to the cytoplasm. Component of the ribosome, a large ribonucleoprotein complex responsible for the synthesis of proteins in the cell. The small ribosomal subunit (SSU) binds messenger RNAs (mRNAs) and translates the encoded message by selecting cognate aminoacyl-transfer RNA (tRNA) molecules. The large subunit (LSU) contains the ribosomal catalytic site termed the peptidyl transferase center (PTC), which catalyzes the formation of peptide bonds, thereby polymerizing the amino acids delivered by tRNAs into a polypeptide chain. The nascent polypeptides leave the ribosome through a tunnel in the LSU and interact with protein factors that function in enzymatic processing, targeting, and the membrane insertion of nascent chains at the exit of the ribosomal tunnel. uL1 forms part of the L1 stalk, a mobile element that plays a role in evacuating the exit-site tRNA. This Schizosaccharomyces pombe (strain 972 / ATCC 24843) (Fission yeast) protein is Large ribosomal subunit protein uL1B (rpl101).